We begin with the raw amino-acid sequence, 1544 residues long: Lysine-specific demethylase 5B (1544 aa).

The region spanning 32–73 is the JmjN domain; it reads CPVFEPSWEEFADPFAFIHKIRPIAEQTGICKVRPPPDWQPP. Residues 97–187 form the ARID domain; the sequence is TRVKLNFLDQ…ILNPYNLFLS (91 aa). Residues K148, K204, K209, K242, K274, and K278 each participate in a glycyl lysine isopeptide (Lys-Gly) (interchain with G-Cter in SUMO2) cross-link. A disordered region spans residues 201–230; the sequence is TDTKDKEYKPHDIPQRQSVQPSETCPPARR. Over residues 202–214 the composition is skewed to basic and acidic residues; that stretch reads DTKDKEYKPHDIP. Residues 309 to 359 form a PHD-type 1 zinc finger; that stretch reads LYVCLLCGSGNDEDRLLLCDGCDDSYHTFCLIPPLHDVPKGDWRCPKCLAQ. Y425 serves as a coordination point for 2-oxoglutarate. A JmjC domain is found at 453 to 619; it reads EYLDSGWNLN…LGRQCVEHYR (167 aa). H499 and E501 together coordinate Fe cation. Positions 507, 509, and 517 each coordinate 2-oxoglutarate. H587 lines the Fe cation pocket. A C5HC2 zinc finger spans residues 692 to 744; sequence CVKCKTTCFMSAISCSCKPGLLVCLHHVKELCSCPPYKYKLRYRYTLDDLYPM. A Glycyl lysine isopeptide (Lys-Gly) (interchain with G-Cter in SUMO2) cross-link involves residue K769. The residue at position 832 (K832) is an N6-acetyllysine. Phosphoserine is present on S986. Residues 1176–1224 form a PHD-type 2 zinc finger; that stretch reads IKICLCQKAPAAPMIQCELCRDAFHTSCVAVPSISQGLRIWLCPHCRRS. A Phosphoserine modification is found at S1328. The disordered stretch occupies residues 1374–1400; it reads PSPAQQTDRSSPVRPSSEKNDCCRGKR. Positions 1376–1387 are enriched in polar residues; the sequence is PAQQTDRSSPVR. Basic and acidic residues predominate over residues 1389–1400; it reads SSEKNDCCRGKR. K1450 participates in a covalent cross-link: Glycyl lysine isopeptide (Lys-Gly) (interchain with G-Cter in SUMO2). Phosphoserine is present on S1456. Residues 1484-1538 form a PHD-type 3 zinc finger; it reads DAICPAVSCLQPEGDEVDWVQCDGSCNQWFHQVCVGVSPEMAEKEDYICVRCTVK.

It belongs to the JARID1 histone demethylase family. Interacts with FOXG1B, PAX9, MYC, MYCN and RB1. Interacts with HDAC1, HDAC4, HDAC5 and HDAC7. Interacts (via PHD-type 1 zinc finger) with histone H3 unmodified at 'Lys-4'; the interaction is inhibited when histone H3 is methylated at 'Arg-2' or 'Lys-4'. Fe(2+) is required as a cofactor. As to expression, ubiquitously expressed, with highest levels in testis. Down-regulated in melanoma and glioblastoma. Up-regulated in breast cancer (at protein level).

It is found in the nucleus. The catalysed reaction is N(6),N(6),N(6)-trimethyl-L-lysyl(4)-[histone H3] + 3 2-oxoglutarate + 3 O2 = L-lysyl(4)-[histone H3] + 3 formaldehyde + 3 succinate + 3 CO2. Several specific inhibitors are being developed and tested. The inhibitor KDOAM-25 inhibits its demethylase activity, resulting to cell cycle arrest in myeloma cells. Functionally, histone demethylase that demethylates 'Lys-4' of histone H3, thereby playing a central role in histone code. Does not demethylate histone H3 'Lys-9' or H3 'Lys-27'. Demethylates trimethylated, dimethylated and monomethylated H3 'Lys-4'. Acts as a transcriptional corepressor for FOXG1B and PAX9. Favors the proliferation of breast cancer cells by repressing tumor suppressor genes such as BRCA1 and HOXA5. In contrast, may act as a tumor suppressor for melanoma. Represses the CLOCK-BMAL1 heterodimer-mediated transcriptional activation of the core clock component PER2. The chain is Lysine-specific demethylase 5B (KDM5B) from Homo sapiens (Human).